The chain runs to 64 residues: Phylloxin-B1 (64 aa).

Positions 1 to 22 (MVFLKKSLLLVLFVGLVSLSIC) are cleaved as a signal peptide. The propeptide occupies 23–42 (EENKREEHEEIEENKEKAEE). A Glutamine amide modification is found at Gln-63.

In terms of tissue distribution, expressed by the skin glands.

Its subcellular location is the secreted. Antimicrobial peptide against the wall-less bacteria A.laidlawii and S.melliferum, the Gram-positive bacteria B.megaterium KM, C.glutamicum ATCC 27853 and M.luteus ATCC 27853 and the Gram-negative-bacteria R.meliloti 102F34 and E.coli K12. The polypeptide is Phylloxin-B1 (Phyllomedusa bicolor (Two-colored leaf frog)).